We begin with the raw amino-acid sequence, 420 residues long: Gamma-glutamyl phosphate reductase (420 aa).

The protein belongs to the gamma-glutamyl phosphate reductase family.

The protein resides in the cytoplasm. The catalysed reaction is L-glutamate 5-semialdehyde + phosphate + NADP(+) = L-glutamyl 5-phosphate + NADPH + H(+). It participates in amino-acid biosynthesis; L-proline biosynthesis; L-glutamate 5-semialdehyde from L-glutamate: step 2/2. Catalyzes the NADPH-dependent reduction of L-glutamate 5-phosphate into L-glutamate 5-semialdehyde and phosphate. The product spontaneously undergoes cyclization to form 1-pyrroline-5-carboxylate. In Streptococcus pneumoniae (strain 70585), this protein is Gamma-glutamyl phosphate reductase.